Reading from the N-terminus, the 396-residue chain is Tryptophan synthase beta chain (396 aa).

The residue at position 86 (lysine 86) is an N6-(pyridoxal phosphate)lysine.

It belongs to the TrpB family. In terms of assembly, tetramer of two alpha and two beta chains. The cofactor is pyridoxal 5'-phosphate.

The catalysed reaction is (1S,2R)-1-C-(indol-3-yl)glycerol 3-phosphate + L-serine = D-glyceraldehyde 3-phosphate + L-tryptophan + H2O. Its pathway is amino-acid biosynthesis; L-tryptophan biosynthesis; L-tryptophan from chorismate: step 5/5. In terms of biological role, the beta subunit is responsible for the synthesis of L-tryptophan from indole and L-serine. The sequence is that of Tryptophan synthase beta chain from Pectobacterium atrosepticum (strain SCRI 1043 / ATCC BAA-672) (Erwinia carotovora subsp. atroseptica).